A 384-amino-acid chain; its full sequence is Calreticulin-3 (384 aa).

The signal sequence occupies residues M1–A19. The segment at T20–E197 is N-domain. N42 is a glycosylation site (N-linked (GlcNAc...) asparagine). C105 and C137 are disulfide-bonded. Residues Y109, K111, Y128, and D135 each contribute to the an alpha-D-glucoside site. 7 tandem repeats follow at residues I191 to L202, E208 to Q219, K221 to K230, D234 to G245, G249 to P259, D263 to H271, and D273 to T283. The segment at I191–G245 is 4 X approximate repeats. The P-domain stretch occupies residues Y198–F294. The N-linked (GlcNAc...) asparagine glycan is linked to N201. The 3 X approximate repeats stretch occupies residues G249–T283. Residues E295–L384 are C-domain. E303 contacts an alpha-D-glucoside. A Prevents secretion from ER motif is present at residues R381 to L384.

This sequence belongs to the calreticulin family. Component of an EIF2 complex at least composed of CELF1/CUGBP1, CALR, CALR3, EIF2S1, EIF2S2, HSP90B1 and HSPA5. As to expression, testis specific.

The protein resides in the endoplasmic reticulum lumen. In terms of biological role, during spermatogenesis, may act as a lectin-independent chaperone for specific client proteins such as ADAM3. Required for sperm fertility. CALR3 capacity for calcium-binding may be absent or much lower than that of CALR. The chain is Calreticulin-3 (CALR3) from Homo sapiens (Human).